The following is a 638-amino-acid chain: Methylmalonyl-CoA mutase small subunit (638 aa).

Positions 1-11 (MSSTDQGTNPA) are enriched in polar residues. The tract at residues 1–34 (MSSTDQGTNPADTDDLTPTTLSLAGDFPKATEEQ) is disordered.

It belongs to the methylmalonyl-CoA mutase family. Heterodimer of an alpha and a beta chain. Requires adenosylcob(III)alamin as cofactor.

The enzyme catalyses (R)-methylmalonyl-CoA = succinyl-CoA. Its pathway is metabolic intermediate metabolism; propanoyl-CoA degradation; succinyl-CoA from propanoyl-CoA: step 3/3. Catalyzes the isomerization of succinyl-CoA to methylmalonyl-CoA during synthesis of propionate from tricarboxylic acid-cycle intermediates. The sequence is that of Methylmalonyl-CoA mutase small subunit (mutA) from Propionibacterium freudenreichii subsp. shermanii.